The primary structure comprises 384 residues: GDSL esterase/lipase At1g71691 (384 aa).

Positions 1–27 (MAFHFRRLCFFSALLAVVLQLLHGVSG) are cleaved as a signal peptide. The active-site Nucleophile is the S62. Catalysis depends on residues D348 and H351.

It belongs to the 'GDSL' lipolytic enzyme family.

It localises to the secreted. The chain is GDSL esterase/lipase At1g71691 from Arabidopsis thaliana (Mouse-ear cress).